The chain runs to 370 residues: Histidinol-phosphate aminotransferase (370 aa).

Residue K220 is modified to N6-(pyridoxal phosphate)lysine.

It belongs to the class-II pyridoxal-phosphate-dependent aminotransferase family. Histidinol-phosphate aminotransferase subfamily. In terms of assembly, homodimer. It depends on pyridoxal 5'-phosphate as a cofactor.

The enzyme catalyses L-histidinol phosphate + 2-oxoglutarate = 3-(imidazol-4-yl)-2-oxopropyl phosphate + L-glutamate. It participates in amino-acid biosynthesis; L-histidine biosynthesis; L-histidine from 5-phospho-alpha-D-ribose 1-diphosphate: step 7/9. This chain is Histidinol-phosphate aminotransferase, found in Granulibacter bethesdensis (strain ATCC BAA-1260 / CGDNIH1).